The primary structure comprises 782 residues: Potassium transporter 6 (782 aa).

Residues 1 to 18 are Cytoplasmic-facing; the sequence is MEIESGSYQNAKKESWRT. A helical membrane pass occupies residues 19–39; sequence VLTLAYQSLGVVYGDLSISPL. Topologically, residues 40-61 are extracellular; it reads YVYKSTFAEDIHHSESNEEIFG. Residues 62 to 82 form a helical membrane-spanning segment; it reads VLSFIFWTITLVPLLKYVFIV. Residues 83 to 153 lie on the Cytoplasmic side of the membrane; the sequence is LRADDNGEGG…TLEKHGVLQK (71 aa). A helical membrane pass occupies residues 154–174; it reads ILLVLALIGTCMVIGDGVLTP. The Extracellular portion of the chain corresponds to 175–195; it reads AISVFSAVSGVELSMSKEHHK. The helical transmembrane segment at 196–216 threads the bilayer; that stretch reads YIELPAACVILIGLFALQHYG. The Cytoplasmic portion of the chain corresponds to 217–219; the sequence is THR. Residues 220–240 traverse the membrane as a helical segment; that stretch reads VGFLFAPVILLWLMCISAIGV. Topologically, residues 241 to 270 are extracellular; that stretch reads YNIFHWNPHVYQALSPYYMYKFLKKTQSRG. The helical transmembrane segment at 271–291 threads the bilayer; the sequence is WMSLGGILLCITGSEAMFADL. The Cytoplasmic segment spans residues 292–296; it reads GHFSQ. Residues 297–317 traverse the membrane as a helical segment; it reads LSIKIAFTSLVYPSLILAYMG. Over 318-347 the chain is Extracellular; it reads QAAYLSQHHIIESEYNIGFYVSVPERLRWP. The helical transmembrane segment at 348–368 threads the bilayer; it reads VLVIAILAAVVGSQAIITGTF. The Cytoplasmic segment spans residues 369 to 395; it reads SIIKQCSALGCFPKVKIVHTSSKIHGQ. Residues 396–416 form a helical membrane-spanning segment; it reads IYIPEINWILMVLCLAVTIGF. Residues 417 to 421 lie on the Extracellular side of the membrane; sequence RDTKR. The next 2 membrane-spanning stretches (helical) occupy residues 422 to 442 and 443 to 463; these read LGNA…CLMS and LVIV…VVFF. The Extracellular segment spans residues 464–474; the sequence is GTIESLYFSAS. The chain crosses the membrane as a helical span at residues 475 to 495; the sequence is LIKFLEGAWVPIALAFCFLLA. Topologically, residues 496–782 are cytoplasmic; that stretch reads MCTWHYGTLK…TLEVGMIYNV (287 aa). Residues 664 to 675 are compositionally biased toward basic and acidic residues; the sequence is YESDIDDPDKPG. Residues 664–693 are disordered; sequence YESDIDDPDKPGTSEIRSPKPKKKSKSKVK. Basic residues predominate over residues 682–693; it reads PKPKKKSKSKVK.

This sequence belongs to the HAK/KUP transporter (TC 2.A.72.3) family.

It localises to the cell membrane. Probable potassium transporter. The chain is Potassium transporter 6 (POT6) from Arabidopsis thaliana (Mouse-ear cress).